The sequence spans 288 residues: MSIKIENLTHVYMQETPFEKKAIDDVNLEIKNGEFIALIGHTGSGKSTLIQHINGLLKPHSGRIIIDDIDITKKEVKMSEIRKKVGLVFQYPEYQLFEETIEKDIAFGPKNLNLSEEEINKRIKRAMNIVGLDYEKYRDKSPFELSGGQKRRVAIAGVVAMEPEVLILDEPTAGLDPKGRDEILGEIKDLHKEYNMTIILVSHSMEDVAKLATRVLVMHKGKCILDGEPSQVFNEVDTLESVGLAAPQVTYLMRSLKEKGFNISENIFTIEQAKKELLKIFNNKATNC.

An ABC transporter domain is found at 3–245 (IKIENLTHVY…VDTLESVGLA (243 aa)). Residue 40-47 (GHTGSGKS) coordinates ATP.

It belongs to the ABC transporter superfamily. Energy-coupling factor EcfA family. Forms a stable energy-coupling factor (ECF) transporter complex composed of 2 membrane-embedded substrate-binding proteins (S component), 2 ATP-binding proteins (A component) and 2 transmembrane proteins (T component).

It localises to the cell membrane. ATP-binding (A) component of a common energy-coupling factor (ECF) ABC-transporter complex. Unlike classic ABC transporters this ECF transporter provides the energy necessary to transport a number of different substrates. This is Energy-coupling factor transporter ATP-binding protein EcfA2 from Clostridium tetani (strain Massachusetts / E88).